A 636-amino-acid chain; its full sequence is Multicopper oxidase CTB12 (636 aa).

The signal sequence occupies residues 1–23 (MWSVRLYPLALTLLFQCVSPAAA). The Plastocyanin-like 1 domain occupies 62-168 (AGIGFREAIF…LYGAVVIAPD (107 aa)). Positions 104 and 106 each coordinate Cu cation. A glycan (N-linked (GlcNAc...) asparagine) is linked at Asn136. Cu cation-binding residues include His148 and His150. Asn304 is a glycosylation site (N-linked (GlcNAc...) asparagine). The Plastocyanin-like 2 domain maps to 318-381 (LTFVNPGGLY…QEKARHVVRV (64 aa)). N-linked (GlcNAc...) asparagine glycosylation occurs at Asn472. The Plastocyanin-like 3 domain maps to 486 to 613 (NVEDVPATEL…GGMGMVVLDG (128 aa)). Cu cation contacts are provided by His519, His522, and His524. Asn576 carries N-linked (GlcNAc...) asparagine glycosylation. Residues His595, Cys596, His597, and His601 each contribute to the Cu cation site.

Belongs to the multicopper oxidase family.

Its pathway is mycotoxin biosynthesis. Its function is as follows. Multicopper oxidase; part of the gene cluster that mediates the biosynthesis of cercosporin, a light-activated, non-host-selective toxin. The perylenequinone chromophore of cercosporin absorbs light energy to attain an electronically-activated triplet state and produces active oxygen species such as the hydroxyl radical, superoxide, hydrogen peroxide or singlet oxygen upon reaction with oxygen molecules. These reactive oxygen species cause damage to various cellular components including lipids, proteins and nucleic acids. The first step of cercosporin biosynthesis is performed by the polyketide synthase CTB1 which catalyzes the formation of nor-toralactone. The starter unit acyltransferase (SAT) domain of CTB1 initiates polyketide extension by the selective utilization of acetyl-CoA, which is elongated to the heptaketide in the beta-ketoacyl synthase (KS) domain by successive condensations with six malonyl units introduced by the malonyl acyltransferase (MAT) domain. The product template (PT) domain catalyzes C4-C9 and C2-C11 aldol cyclizations and dehydrations to a trihydroxynaphthalene, which is thought to be delivered to the thioesterase (TE) domain for product release. The bifunctional enzyme CTB3 then methylates nor-toralactone to toralactone before conducting an unusual oxidative aromatic ring opening. The O-methyltransferase CTB2 further methylates the nascent OH-6 of the CBT3 product, blocking further oxidation at this site before the reductase CTB6 reduces the 2-oxopropyl ketone at position C7, giving naphthalene. The FAD-dependent monooxygenase CTB5 in concert with the multicopper oxidase CTB12 are responsible for homodimerization of naphthalene with CTB7 installing the dioxepine moiety, finally producing cercosporin. The fasciclin domain-containing protein CTB11 might act with CTB5 and CTB12 whereas the roles of CTB9 and CTB10 have still to be elucidated. The sequence is that of Multicopper oxidase CTB12 from Cercospora beticola (Sugarbeet leaf spot fungus).